A 619-amino-acid polypeptide reads, in one-letter code: Guanylate cyclase soluble subunit beta-1 (619 aa).

His105 contacts heme. The Guanylate cyclase domain occupies Thr421–Glu554.

This sequence belongs to the adenylyl cyclase class-4/guanylyl cyclase family. In terms of assembly, the active enzyme is formed by a heterodimer of an alpha and a beta subunit. Homotetramer; dimer of dimers (in vitro). Heterodimer with GUCY1A1. Can also form inactive homodimers in vitro. Heme serves as cofactor. As to expression, lung and brain.

Its subcellular location is the cytoplasm. The catalysed reaction is GTP = 3',5'-cyclic GMP + diphosphate. Its activity is regulated as follows. Activated by nitric oxide in the presence of magnesium or manganese ions. Mediates responses to nitric oxide (NO) by catalyzing the biosynthesis of the signaling molecule cGMP. The polypeptide is Guanylate cyclase soluble subunit beta-1 (Gucy1b1) (Rattus norvegicus (Rat)).